We begin with the raw amino-acid sequence, 221 residues long: Cyclin-U3-1 (221 aa).

The protein belongs to the cyclin family. Cyclin U/P subfamily. In terms of assembly, interacts with CDKA-1 and CDKB1-1. Expressed in roots, stems and flowers. Expressed in the shoot apex, leaf primordia and young leaves.

The protein is Cyclin-U3-1 (CYCU3-1) of Arabidopsis thaliana (Mouse-ear cress).